Here is a 2623-residue protein sequence, read N- to C-terminus: Immunoglobulin superfamily member 10 (2623 aa).

The signal sequence occupies residues 1 to 28 (MKVKGRGITCLLVSFAVICLVATPGGKA). Residues 29–56 (CPRRCACYMPTEVHCTFRYLTSIPDSIP) form the LRRNT domain. LRR repeat units follow at residues 58–79 (NVERINLGYNSLVRLMETDFSG), 82–103 (KLELLMLHSNGIHTIPDKTFSD), 106–127 (ALQVLKMSYNKVRKLQKDTFYG), 130–151 (SLTRLHMDHNNIEFINPEVFYG), 154–175 (FLRLVHLEGNQLTKLHPDTFVS), and 186–207 (FIKFLYLSDNFLTSLPQEMVSY). The 63-residue stretch at 219–281 (NPWTCDCHLK…VSAAAFQCAK (63 aa)) folds into the LRRCT domain. Residues N319 and N439 are each glycosylated (N-linked (GlcNAc...) asparagine). Ig-like C2-type domains follow at residues 461-567 (PRAE…YRIT) and 571-661 (PLVE…FQVS). Disulfide bonds link C497-C551 and C595-C645. N-linked (GlcNAc...) asparagine glycosylation occurs at N627. 2 disordered regions span residues 668-692 (RPLEHDGETEGSGLDESNPIAHLKE) and 767-788 (AMPDKRENTTVSPPPVVTQLPN). N774 and N999 each carry an N-linked (GlcNAc...) asparagine glycan. Disordered regions lie at residues 1334-1376 (TQTE…AMTP) and 1434-1453 (STIASETTLSSKSHQSTTTR). Over residues 1335 to 1356 (QTERSRAQTIQREQEPQKKNRT) the composition is skewed to basic and acidic residues. Polar residues predominate over residues 1357-1373 (DPNISPDQSSGFTTPTA). Ig-like C2-type domains lie at 1648 to 1739 (PRIV…VTLS), 1745 to 1836 (PRIL…VKIQ), 1841 to 1933 (PPVI…VMLT), 1941 to 2034 (PRIE…VSLR), 2037 to 2135 (PAKI…VHLT), 2141 to 2229 (PRIR…YKLD), 2234 to 2331 (PPLI…LEVL), 2337 to 2427 (PTFR…VILE), 2432 to 2518 (PVIL…TLIT), and 2528 to 2623 (PRIT…IQVI). Intrachain disulfides connect C1670/C1723, C1767/C1820, and C1864/C1917. 2 N-linked (GlcNAc...) asparagine glycosylation sites follow: N1899 and N1962. 7 disulfides stabilise this stretch: C1963–C2016, C2060–C2119, C2163–C2213, C2261–C2313, C2359–C2411, C2454–C2506, and C2550–C2605. N2101 carries N-linked (GlcNAc...) asparagine glycosylation. The residue at position 2603 (Y2603) is a Phosphotyrosine.

It is found in the secreted. In terms of biological role, involved in the control of early migration of neurons expressing gonadotropin-releasing hormone (GNRH neurons). May be involved in the maintenance of osteochondroprogenitor cells pool. This chain is Immunoglobulin superfamily member 10 (IGSF10), found in Homo sapiens (Human).